The following is a 195-amino-acid chain: Adenylate kinase (195 aa).

Gly11–Thr16 is a binding site for ATP. The segment at Ser31–Val60 is NMP. AMP is bound by residues Thr32, Arg37, Arg58 to Val60, Gly86 to Arg89, and Gln93. Residues Leu127–Asp137 are LID. Arg128 contributes to the ATP binding site. Arg134 and Arg145 together coordinate AMP. Gln173 contributes to the ATP binding site.

The protein belongs to the adenylate kinase family. As to quaternary structure, monomer.

The protein resides in the cytoplasm. It catalyses the reaction AMP + ATP = 2 ADP. Its pathway is purine metabolism; AMP biosynthesis via salvage pathway; AMP from ADP: step 1/1. Functionally, catalyzes the reversible transfer of the terminal phosphate group between ATP and AMP. Plays an important role in cellular energy homeostasis and in adenine nucleotide metabolism. The chain is Adenylate kinase from Cyanothece sp. (strain PCC 7425 / ATCC 29141).